The chain runs to 226 residues: Large ribosomal subunit protein uL1 (226 aa).

It belongs to the universal ribosomal protein uL1 family. In terms of assembly, part of the 50S ribosomal subunit.

Functionally, binds directly to 23S rRNA. The L1 stalk is quite mobile in the ribosome, and is involved in E site tRNA release. Its function is as follows. Protein L1 is also a translational repressor protein, it controls the translation of the L11 operon by binding to its mRNA. This chain is Large ribosomal subunit protein uL1, found in Mycoplasma capricolum subsp. capricolum (strain California kid / ATCC 27343 / NCTC 10154).